A 290-amino-acid chain; its full sequence is DegV domain-containing protein MG450 (290 aa).

In terms of domain architecture, DegV spans 3–289; the sequence is IAFLVDSVSN…INSYAFLIQT (287 aa). Positions 65 and 97 each coordinate hexadecanoate.

In terms of biological role, may bind long-chain fatty acids, such as palmitate, and may play a role in lipid transport or fatty acid metabolism. The protein is DegV domain-containing protein MG450 of Mycoplasma genitalium (strain ATCC 33530 / DSM 19775 / NCTC 10195 / G37) (Mycoplasmoides genitalium).